A 183-amino-acid chain; its full sequence is Peptide deformylase (183 aa).

Fe cation is bound by residues Cys-110 and His-153. Glu-154 is a catalytic residue. His-157 contacts Fe cation.

Belongs to the polypeptide deformylase family. It depends on Fe(2+) as a cofactor.

The catalysed reaction is N-terminal N-formyl-L-methionyl-[peptide] + H2O = N-terminal L-methionyl-[peptide] + formate. In terms of biological role, removes the formyl group from the N-terminal Met of newly synthesized proteins. Requires at least a dipeptide for an efficient rate of reaction. N-terminal L-methionine is a prerequisite for activity but the enzyme has broad specificity at other positions. The polypeptide is Peptide deformylase (Listeria welshimeri serovar 6b (strain ATCC 35897 / DSM 20650 / CCUG 15529 / CIP 8149 / NCTC 11857 / SLCC 5334 / V8)).